The sequence spans 205 residues: Ephrin-A1 (205 aa).

An N-terminal signal peptide occupies residues M1–A18. The 133-residue stretch at D19–I151 folds into the Ephrin RBD domain. A glycan (N-linked (GlcNAc...) asparagine) is linked at N26. 2 disulfide bridges follow: C51-C92 and C80-C140. The GPI-anchor amidated serine moiety is linked to residue S182. Positions A183–P205 are cleaved as a propeptide — removed in mature form.

The protein belongs to the ephrin family. Monomer. Homodimer. Forms heterodimers with EPHA2. Binds to the receptor tyrosine kinases EPHA2, EPHA3, EPHA4, EPHA5, EPHA6 and EPHA7. Also binds with low affinity to EPHA1. Post-translationally, undergoes proteolysis by a metalloprotease to give rise to a soluble monomeric form. In terms of processing, N-Glycosylation is required for binding to EPHA2 receptor and inducing its internalization. In terms of tissue distribution, brain. Down-regulated in primary glioma tissues compared to the normal tissues. The soluble monomeric form is expressed in the glioblastoma multiforme (GBM) and breast cancer cells (at protein level).

The protein resides in the cell membrane. It is found in the secreted. Its function is as follows. Cell surface GPI-bound ligand for Eph receptors, a family of receptor tyrosine kinases which are crucial for migration, repulsion and adhesion during neuronal, vascular and epithelial development. Binds promiscuously Eph receptors residing on adjacent cells, leading to contact-dependent bidirectional signaling into neighboring cells. Plays an important role in angiogenesis and tumor neovascularization. The recruitment of VAV2, VAV3 and PI3-kinase p85 subunit by phosphorylated EPHA2 is critical for EFNA1-induced RAC1 GTPase activation and vascular endothelial cell migration and assembly. Exerts anti-oncogenic effects in tumor cells through activation and down-regulation of EPHA2. Activates EPHA2 by inducing tyrosine phosphorylation which leads to its internalization and degradation. Acts as a negative regulator in the tumorigenesis of gliomas by down-regulating EPHA2 and FAK. Can evoke collapse of embryonic neuronal growth cone and regulates dendritic spine morphogenesis. The protein is Ephrin-A1 (EFNA1) of Homo sapiens (Human).